The following is a 346-amino-acid chain: Tripartite motif-containing protein 44 (346 aa).

Residues 68-167 (TPPASGGDDA…ETEAESEFDP (100 aa)) form a disordered region. Acidic residues predominate over residues 89–167 (EGEVESEVGE…ETEAESEFDP (79 aa)). The segment at 176-217 (VAKRKCPDHGLDLSTYCQEDRQLICVLCPVIGAHRGHQLSTL) adopts a B box-type zinc-finger fold. C181, H184, C203, and H209 together coordinate Zn(2+). Residues 292–327 (AHVTEILADIQSHMDRLMTQMAQAKEQLDTSNESAE) are a coiled coil. The interval 313–346 (AQAKEQLDTSNESAEPKAEGDEEGPSGASEEEDT) is disordered. Acidic residues predominate over residues 332 to 346 (GDEEGPSGASEEEDT). Phosphoserine occurs at positions 338 and 341.

As to quaternary structure, interacts (via coiled coil) with TRIM17 (via coiled coil). Expressed mainly in brain with high level in cerebral hemispheres and cerebellum. Lower expression in kidney, lung and spleen. In brain is detected in the hippocampus, thalamic and pretectal nuclei, substantia nigra, the dorsal part of the medulla, the cerebellum, in the olfactory nucleus, other cortical areas apart from hippocampus and the striatum. Indeed expression is confined in neuronal somata namely in the CA3 region and dentate gyrus of the hippocampus, caudate-putamen, parabranchial nucleus, olfactory nucleus, cortex, deep cerebellar nuclei and thalamus. Also highly expressed in the spleen. thymus and testis.

Its function is as follows. May play a role in the process of differentiation and maturation of neuronal cells. May regulate the activity of TRIM17. Is a negative regulator of PAX6 expression. In Mus musculus (Mouse), this protein is Tripartite motif-containing protein 44 (Trim44).